Reading from the N-terminus, the 253-residue chain is Imidazole glycerol phosphate synthase subunit HisF (253 aa).

Catalysis depends on residues D11 and D130.

The protein belongs to the HisA/HisF family. As to quaternary structure, heterodimer of HisH and HisF.

It localises to the cytoplasm. The catalysed reaction is 5-[(5-phospho-1-deoxy-D-ribulos-1-ylimino)methylamino]-1-(5-phospho-beta-D-ribosyl)imidazole-4-carboxamide + L-glutamine = D-erythro-1-(imidazol-4-yl)glycerol 3-phosphate + 5-amino-1-(5-phospho-beta-D-ribosyl)imidazole-4-carboxamide + L-glutamate + H(+). It participates in amino-acid biosynthesis; L-histidine biosynthesis; L-histidine from 5-phospho-alpha-D-ribose 1-diphosphate: step 5/9. Functionally, IGPS catalyzes the conversion of PRFAR and glutamine to IGP, AICAR and glutamate. The HisF subunit catalyzes the cyclization activity that produces IGP and AICAR from PRFAR using the ammonia provided by the HisH subunit. The polypeptide is Imidazole glycerol phosphate synthase subunit HisF (Dehalococcoides mccartyi (strain ATCC BAA-2100 / JCM 16839 / KCTC 5957 / BAV1)).